Reading from the N-terminus, the 444-residue chain is Mitogen-activated protein kinase mpk-1 (444 aa).

Composition is skewed to polar residues over residues 1 to 17 and 24 to 56; these read MPTWIPNNLCAQPTTRN and GHPQATQQQSAPGSLAYRNSSNIPNGATNHVRQ. The tract at residues 1-56 is disordered; sequence MPTWIPNNLCAQPTTRNAKPPSNGHPQATQQQSAPGSLAYRNSSNIPNGATNHVRQ. A Protein kinase domain is found at 96-384; it reads YVNLSYIGEG…IEQALAHPYL (289 aa). ATP is bound by residues 102–110 and Lys-125; that span reads IGEGAYGMV. Asp-220 acts as the Proton acceptor in catalysis. Thr-256 carries the post-translational modification Phosphothreonine. The TXY motif lies at 256–258; the sequence is TEY. Tyr-258 bears the Phosphotyrosine mark.

It belongs to the protein kinase superfamily. CMGC Ser/Thr protein kinase family. MAP kinase subfamily. In terms of assembly, isoform a interacts with gck-1 (via N-terminus). The cofactor is Mg(2+). Post-translationally, isoform a is phosphorylated at the pachytene stage during oogenesis and is negatively regulated by gck-1. Isoform b is phosphorylated in proximal oocytes. In terms of tissue distribution, expressed in cells lining the rectum. Isoform a is expressed in nervous system, body wall muscles and posterior intestine. Isoform b expression may be restricted to germline.

It carries out the reaction L-seryl-[protein] + ATP = O-phospho-L-seryl-[protein] + ADP + H(+). The catalysed reaction is L-threonyl-[protein] + ATP = O-phospho-L-threonyl-[protein] + ADP + H(+). Its activity is regulated as follows. Activated by dual phosphorylation at Thr-256 and Tyr-258. May be inactivated by lip-1-mediated dephosphorylation. Functions in let-60 Ras signaling pathway; acts downstream of lin-45 raf kinase, but before the lin-1 gene product in controlling vulval cell differentiation. Plays a negative role in proximal germline proliferation in the mitotic zone. Required for progression of developing oocytes through the pachytene stage, perhaps acting after efl-1/dpl-1-mediated gene activation and before gld-1 down-regulation. May play a role in global X chromosome reactivation or be indirectly required for progression of germ cells through meiosis to the point where X reactivation occurs. In oocytes, inhibits the activity of the chloride channel clh-3, likely by activating gck-3. Plays a role in response to M.nematophilum-mediated bacterial infection by promoting tail swelling and preventing constipation. Involved in fluid homeostasis. In addition, involved in the up-regulation of lysozyme ilys-3 expression in the intestine in responses to M.nematophilum-mediated bacterial infection. By phosphorylating transcription factor skn-1 (isoform c) may play a role in increasing life span downstream of lin-45, let-60 and mek-2. By up-regulating cep-1 and down-regulating gld-1 expression in the late pachytene stage, plays a role in germline apoptosis in response to DNA damage. Regulates egl-1 expression in response to DNA damage, probably upstream of cep-1. Functionally, suppresses germline tumor formation by preventing the dedifferentiation of secondary spermatocytes probably upstream of rskn-1. In Caenorhabditis elegans, this protein is Mitogen-activated protein kinase mpk-1 (mpk-1).